The sequence spans 200 residues: Glycerol-3-phosphate acyltransferase (200 aa).

Helical transmembrane passes span 4-24 (FALC…AVIV), 53-73 (WAAL…VWCG), 80-100 (QFEL…PIFF), 115-135 (IAPI…LVFV), and 138-158 (GYSS…VWWF).

The protein belongs to the PlsY family. In terms of assembly, probably interacts with PlsX.

It is found in the cell inner membrane. The catalysed reaction is an acyl phosphate + sn-glycerol 3-phosphate = a 1-acyl-sn-glycero-3-phosphate + phosphate. Its pathway is lipid metabolism; phospholipid metabolism. Its function is as follows. Catalyzes the transfer of an acyl group from acyl-phosphate (acyl-PO(4)) to glycerol-3-phosphate (G3P) to form lysophosphatidic acid (LPA). This enzyme utilizes acyl-phosphate as fatty acyl donor, but not acyl-CoA or acyl-ACP. This chain is Glycerol-3-phosphate acyltransferase, found in Actinobacillus succinogenes (strain ATCC 55618 / DSM 22257 / CCUG 43843 / 130Z).